A 569-amino-acid chain; its full sequence is Glucose-6-phosphate isomerase, cytosolic 2A (569 aa).

Residue Glu360 is the Proton donor of the active site. Residues His391 and Lys516 contribute to the active site.

The protein belongs to the GPI family. As to quaternary structure, homodimer.

It localises to the cytoplasm. The catalysed reaction is alpha-D-glucose 6-phosphate = beta-D-fructose 6-phosphate. Its pathway is carbohydrate degradation; glycolysis; D-glyceraldehyde 3-phosphate and glycerone phosphate from D-glucose: step 2/4. This is Glucose-6-phosphate isomerase, cytosolic 2A (PGIC2-A) from Clarkia lewisii (Farewell-to-spring).